A 495-amino-acid polypeptide reads, in one-letter code: Cyclic GMP-AMP synthase (495 aa).

The tract at residues 1–128 is disordered; that stretch reads MAARRGKSTR…AGATELAAPA (128 aa). The tract at residues 1-134 is DNA-binding; it reads MAARRGKSTR…AAPARMEAPP (134 aa). Residue K7 is modified to N6-acetyllysine. At S13 the chain carries Phosphoserine. Composition is skewed to basic and acidic residues over residues 52–76 and 105–116; these read CRRE…RAED and RAREARSARELR. The residue at position 56 (K56) is an N6-acetyllysine. The residue at position 57 (S57) is a Phosphoserine. The interval 57–68 is required for association with the cell membrane; sequence SGPDPREKPQVR. The tract at residues 103 to 134 is required for activation upon DNA viral infection; sequence SCRAREARSARELRPQAGATELAAPARMEAPP. Positions 143–148 match the Nuclear export signal motif; sequence LEKVRL. The residue at position 145 (K145) is an N6-lactoyllysine. A DNA-binding region spans residues 147 to 190; the sequence is RLSRHEISEAAEVVNWVVEHLLRRLQGGESEFKGVALLRTGSYY. E165 bears the PolyADP-ribosyl glutamic acid mark. T186 is a GTP binding site. The residue at position 188 (S188) is a Phosphoserine. S188 contributes to the ATP binding site. Residue Y190 is modified to Phosphotyrosine. 2 residues coordinate Mg(2+): E200 and D202. D202 lines the 2',3'-cGAMP pocket. A Glycyl lysine isopeptide (Lys-Gly) (interchain with G-Cter in SUMO) cross-link involves residue K206. A Glycyl lysine isopeptide (Lys-Gly) (interchain with G-Cter in ubiquitin) cross-link involves residue K260. E261 is subject to 5-glutamyl polyglutamate. Residues 268–278 carry the Nuclear localization signal motif; it reads GVTVERKRRGS. S278 is subject to Phosphoserine. D294 contacts GTP. D294 is a binding site for Mg(2+). D294 contributes to the 2',3'-cGAMP binding site. The tract at residues 316-357 is interaction with collided ribosomes; the sequence is SQWLGAKVKNNLKRQPFYLVPKHAKEGSGFQEETWRLSFSHI. K322 participates in a covalent cross-link: Glycyl lysine isopeptide (Lys-Gly) (interchain with G-Cter in SUMO); alternate. Residue K322 forms a Glycyl lysine isopeptide (Lys-Gly) (interchain with G-Cter in ubiquitin); alternate linkage. Residues K337 and R351 each contribute to the 2',3'-cGAMP site. 351-358 is a binding site for GTP; it reads RLSFSHIE. E358 serves as a coordination point for ATP. At K359 the chain carries N6-acetyllysine. A Glycyl lysine isopeptide (Lys-Gly) (interchain with G-Cter in SUMO); alternate cross-link involves residue K359. A Glycyl lysine isopeptide (Lys-Gly) (interchain with G-Cter in ubiquitin); alternate cross-link involves residue K359. The segment at 359–382 is DNA-binding; it reads KDILKNHGQSKTCCEIDGVKCCRK. A Zn(2+)-binding site is contributed by H365. K369 is modified (N6-acetyllysine). Residue K369 forms a Glycyl lysine isopeptide (Lys-Gly) (interchain with G-Cter in SUMO) linkage. 3 residues coordinate Zn(2+): C371, C372, and C379. 2 S-palmitoyl cysteine lipidation sites follow: C379 and C380. Glycyl lysine isopeptide (Lys-Gly) (interchain with G-Cter in ubiquitin) cross-links involve residues K386, K389, K396, and K397. At K389 the chain carries N6-acetyllysine. Residue K389 participates in ATP binding. S410 bears the Phosphoserine mark. 410 to 414 contributes to the ATP binding site; the sequence is SYHVK. A lipid anchor (S-palmitoyl cysteine) is attached at C449. At K481 the chain carries N6-methyllysine.

This sequence belongs to the mab-21 family. In terms of assembly, monomer in the absence of DNA. Homodimer in presence of dsDNA: forms a 2:2 dimer with two enzymes binding to two DNA molecules. Interacts with nucleosomes; interaction is mainly mediated via histones H2A and H2B and inactivates the nucleotidyltransferase activity by blocking DNA-binding and subsequent activation. Interacts with PQBP1 (via WW domain). Interacts with TRIM14; this interaction recruits USP14, leading to deubiquitinate and stabilize CGAS and promote type I interferon production. Interacts with ZCCHC3; promoting sensing of dsDNA by CGAS. Interacts (when not monomethylated) with (poly-ADP-ribosylated) PARP1; interaction takes place in the nucleus and prevents the formation of the PARP1-TIMELESS complex. Interacts (when monomethylated) with SGF29; interaction with SGF29 prevents interaction with PARP1. Interacts with PCBP2; preventing the formation of liquid-like droplets in which CGAS is activated. Interacts with IRGM; promoting CGAS degradation. Mg(2+) serves as cofactor. Requires Mn(2+) as cofactor. The cofactor is Zn(2+). The N-terminal disordered part (1-134) is phosphorylated by AURKB during the G2-M transition, blocking CGAS liquid phase separation and preventing activation. Phosphorylation at Tyr-190 by BLK promotes cytosolic retention. Localizes into the nucleus following dephosphorylation at Tyr-190. Phosphorylation at Ser-410 activates the nucleotidyltransferase activity. Dephosphorylation at Ser-410 by PPP6C impairs its ability to bind GTP, thereby inactivating it. Phosphorylation at Ser-188 by PRKDC inhibits its cyclic GMP-AMP synthase activity by impairing homodimerization and activation. Phosphorylation at Ser-278 by AKT (AKT1, AKT2 or AKT3) suppresses the nucleotidyltransferase activity. Phosphorylation at Ser-278 by CDK1 during mitosis leads to its inhibition, thereby preventing CGAS activation by self-DNA during mitosis. Dephosphorylated at Ser-278 by protein phosphatase PP1 upon mitotic exit. Post-translationally, ubiquitinated at Lys-389 via 'Lys-48'-linked polyubiquitin chains, leading to its SQSTM1-mediated autophagic degradation. Interaction with TRIM14 promotes recruitment of USP14, leading to deubiquitinate Lys-389 and stabilize CGAS. Ubiquitinated at Lys-359 by RNF185 via 'Lys-27'-linked polyubiquitination, promoting CGAS cyclic GMP-AMP synthase activity. Monoubiquitination at Lys-322 by TRIM56 promotes oligomerization and subsequent activation. Monoubiquitination by TRIM41 promotes CGAS activation. Ubiquitination at Lys-260 via 'Lys-48'-linked polyubiquitination promotes its degradation. Deubiquitination at Lys-260 by USP29 promotes its stabilization. Deubiquitinated by USP27X, promoting its stabilization. Ubiquitinated at Lys-386 via 'Lys-63'-linked polyubiquitin chains by MARCHF8, leading to the inhibition of its DNA binding ability. In cycling cells, nucleosome-bound CGAS is ubiquitinated at Lys-396 and Lys-397 via 'Lys-48'-linked polyubiquitin chains by the ECS(SPSB3) complex, leading to its degradation: ubiquitination and degradation of nuclear CGAS during G1 and G2 phases is required to promote low intranuclear CGAS abundance before the next mitotic cycle. In terms of processing, sumoylated at Lys-206 by TRIM38 in uninfected cells and during the early phase of viral infection, promoting its stability by preventing ubiquitination at Lys-260 and subsequent degradation. Desumoylated by SENP2 during the late phase of viral infection. Sumoylation at Lys-322, Lys-359 and Lys-369 prevents DNA-binding, oligomerization and nucleotidyltransferase activity. Desumoylation at Lys-322, Lys-359 and Lys-369 by SENP7 relieves inhibition and activates CGAS. Polyglutamylated by TTLL6 at Glu-261, leading to impair DNA-binding activity. Deglutamylated by AGBL5/CCP5 and AGBL6/CCP6. Post-translationally, acetylation at Lys-359, Lys-369 and Lys-389 inhibits the cyclic GMP-AMP synthase activity. Deacetylated upon cytosolic DNA challenge such as viral infections. Acetylation by KAT5 increases the cyclic GMP-AMP synthase activity by promoting DNA-binding and subsequent activation. In terms of processing, proteolytically cleaved by apoptotic caspases during apoptosis, leading to its inactivation. The damage of the nucleus and the mitochondria during apoptosis leads to leakage of nuclear and mitochondrial DNA, which activate CGAS: cleavage and inactivation during apoptosis in required to prevent cytokine overproduction. Cleaved by CASP7 and CASP3 during virus-induced apoptosis, thereby inactivating it and preventing cytokine overproduction. Cleaved by CASP1 upon DNA virus infection; the cleavage impairs cGAMP production. Also cleaved by the pyroptotic CASP4 during non-canonical inflammasome activation; does not cut at the same sites than CASP1. Degraded via selective autophagy following interaction with IRGM. IRGM promotes CGAS recruitment to autophagosome membranes, promoting its SQSTM1/p62-dependent autophagic degradation. Post-translationally, poly-ADP-ribosylation at Glu-165 by PARP1 impairs DNA-binding, thereby preventing the cyclic GMP-AMP synthase activity. In terms of processing, palmitoylation at Cys-449 by ZDHHC18 impairs DNA-binding, thereby preventing the cyclic GMP-AMP synthase activity. Palmitoylation at Cys-379 and Cys-380 by ZDHHC9 promotes homodimerization and cyclic GMP-AMP synthase activity. Depalmitoylation at Cys-379 and Cys-380 by LYPLAL1 impairs homodimerization and cyclic GMP-AMP synthase activity. Monomethylated at Lys-481 by SETD7. Monomethylation promotes interaction with SGF29, preventing interaction between PARP1 nad SGF29. Demethylation by RIOX1 promotes interaction with PARP1, followed by PARP1 inactivation. Post-translationally, lactylation by AARS2 prevents ability to undergo liquid-liquid phase separation (LLPS), thereby inhibiting CGAS activation.

It localises to the nucleus. The protein resides in the chromosome. It is found in the cell membrane. Its subcellular location is the cytoplasm. The protein localises to the cytosol. The catalysed reaction is GTP + ATP = 2',3'-cGAMP + 2 diphosphate. It catalyses the reaction GTP + ATP = pppGp(2'-5')A + diphosphate. The enzyme catalyses pppGp(2'-5')A = 2',3'-cGAMP + diphosphate. The enzyme activity is strongly increased by double-stranded DNA (dsDNA), but not by single-stranded DNA or RNA. DNA-binding induces the formation of liquid-like droplets in which CGAS is activated. Liquid-like droplets also create a selective environment that restricts entry of negative regulators, such as TREX1 or BANF1/BAF, allowing sensing of DNA. A number of mechanisms exist to restrict its activity toward self-DNA. The nucleotidyltransferase activity is inhibited in the nucleus via its association with nucleosomes: interacts with the acidic patch of histones H2A and H2B, thereby blocking DNA-binding and subsequent activation. CGAS is also inactive when associated with mitotic chromatin. Chromatin-bound CGAS cannot be activated by exogenous DNA in mitotic cells: phosphorylation of the N-terminal disordered part by AURKB during the G2-M transition blocks CGAS liquid phase separation and activation. Activity toward self-DNA is inhibited by BANF1/BAF upon acute loss of nuclear membrane integrity: BANF1/BAF acts by outcompeting CGAS for DNA-binding, thereby preventing CGAS activation. DNA-induced activation at micronuclei is also limited by TREX1, which degrades micronuclear DNA upon nuclear envelope rupture, thereby preventing CGAS activation. CGAS can be released from nucleosomes and activated by MRE11 component of the MRN complex, which displaces CGAS from acidic-patch-mediated sequestration. Acetylation at Lys-359, Lys-369 and Lys-389 inhibits the cyclic GMP-AMP synthase activity. Acetylation by KAT5 increases the cyclic GMP-AMP synthase activity by promoting DNA-binding and subsequent activation. Phosphorylation at Ser-278 suppresses the nucleotidyltransferase activity. Phosphorylation at Ser-410 promotes the cyclic GMP-AMP synthase activity. Phosphorylation at Ser-188 inhibits its cyclic GMP-AMP synthase activity. Ubiquitination at Lys-359 via 'Lys-27'-linked polyubiquitination enhances the cyclic GMP-AMP synthase activity. Monoubiquitination at Lys-322 promotes oligomerization and subsequent activation. Sumoylation at Lys-322, Lys-359 and Lys-369 prevents DNA-binding, oligomerization and nucleotidyltransferase activity. The enzyme activity is impaired by the cleavage by CASP1. In addition to DNA, also activated by collided ribosomes upon translation stress: specifically binds collided ribosomes, promoting its activation and triggering type-I interferon production. Nucleotidyltransferase that catalyzes the formation of cyclic GMP-AMP (2',3'-cGAMP) from ATP and GTP and plays a key role in innate immunity. Catalysis involves both the formation of a 2',5' phosphodiester linkage at the GpA step and the formation of a 3',5' phosphodiester linkage at the ApG step, producing c[G(2',5')pA(3',5')p]. Acts as a key DNA sensor: directly binds double-stranded DNA (dsDNA), inducing the formation of liquid-like droplets in which CGAS is activated, leading to synthesis of 2',3'-cGAMP, a second messenger that binds to and activates STING1, thereby triggering type-I interferon production. Preferentially binds long dsDNA (around 45 bp) and forms ladder-like networks that function cooperatively to stabilize individual cGAS-dsDNA complexes. Acts as a key foreign DNA sensor, the presence of double-stranded DNA (dsDNA) in the cytoplasm being a danger signal that triggers the immune responses. Has antiviral activity by sensing the presence of dsDNA from DNA viruses in the cytoplasm. Also acts as an innate immune sensor of infection by retroviruses by detecting the presence of reverse-transcribed DNA in the cytosol. Detection of retroviral reverse-transcribed DNA in the cytosol may be indirect and be mediated via interaction with PQBP1, which directly binds reverse-transcribed retroviral DNA. Also detects the presence of DNA from bacteria. 2',3'-cGAMP can be transferred from producing cells to neighboring cells through gap junctions, leading to promote STING1 activation and convey immune response to connecting cells. 2',3'-cGAMP can also be transferred between cells by virtue of packaging within viral particles contributing to IFN-induction in newly infected cells in a cGAS-independent but STING1-dependent manner. Also senses the presence of neutrophil extracellular traps (NETs) that are translocated to the cytosol following phagocytosis, leading to synthesis of 2',3'-cGAMP. In addition to foreign DNA, can also be activated by endogenous nuclear or mitochondrial DNA. When self-DNA leaks into the cytosol during cellular stress (such as mitochondrial stress, DNA damage, mitotic arrest or senescence), or is present in form of cytosolic micronuclei, CGAS is activated leading to a state of sterile inflammation. Acts as a regulator of cellular senescence by binding to cytosolic chromatin fragments that are present in senescent cells, leading to trigger type-I interferon production via STING1 and promote cellular senescence. Also involved in the inflammatory response to genome instability and double-stranded DNA breaks: acts by localizing to micronuclei arising from genome instability. Micronuclei, which are frequently found in cancer cells, consist of chromatin surrounded by their own nuclear membrane: following breakdown of the micronuclear envelope, a process associated with chromothripsis, CGAS binds self-DNA exposed to the cytosol, leading to 2',3'-cGAMP synthesis and subsequent activation of STING1 and type-I interferon production. In a healthy cell, CGAS is however kept inactive even in cellular events that directly expose it to self-DNA, such as mitosis, when cGAS associates with chromatin directly after nuclear envelope breakdown or remains in the form of postmitotic persistent nuclear cGAS pools bound to chromatin. Nuclear CGAS is inactivated by chromatin via direct interaction with nucleosomes, which block CGAS from DNA binding and thus prevent CGAS-induced autoimmunity. Also acts as a suppressor of DNA repair in response to DNA damage: inhibits homologous recombination repair by interacting with PARP1, the CGAS-PARP1 interaction leading to impede the formation of the PARP1-TIMELESS complex. In addition to DNA, also sense translation stress: in response to translation stress, translocates to the cytosol and associates with collided ribosomes, promoting its activation and triggering type-I interferon production. The sequence is that of Cyclic GMP-AMP synthase from Sus scrofa (Pig).